The sequence spans 138 residues: Acidic phospholipase A2 CH-E6' (138 aa).

The N-terminal stretch at 1–16 (MRTLWIVAVLLLGVEG) is a signal peptide. 7 disulfide bridges follow: Cys-42–Cys-131, Cys-44–Cys-60, Cys-59–Cys-111, Cys-65–Cys-138, Cys-66–Cys-104, Cys-73–Cys-97, and Cys-91–Cys-102. 3 residues coordinate Ca(2+): Tyr-43, Gly-45, and Gly-47. The active site involves His-63. Asp-64 contributes to the Ca(2+) binding site. Residue Asp-105 is part of the active site.

The protein belongs to the phospholipase A2 family. Group II subfamily. D49 sub-subfamily. The cofactor is Ca(2+). In terms of tissue distribution, expressed by the venom gland.

The protein resides in the secreted. The catalysed reaction is a 1,2-diacyl-sn-glycero-3-phosphocholine + H2O = a 1-acyl-sn-glycero-3-phosphocholine + a fatty acid + H(+). Its function is as follows. Snake venom phospholipase A2 (PLA2) that shows high lipolytic and weak ADP-induced platelet aggregation activities. Also shows weak anticoagulant activity. PLA2 catalyzes the calcium-dependent hydrolysis of the 2-acyl groups in 3-sn-phosphoglycerides. In Crotalus horridus (Timber rattlesnake), this protein is Acidic phospholipase A2 CH-E6'.